Reading from the N-terminus, the 347-residue chain is Phosphoribosylformylglycinamidine cyclo-ligase (347 aa).

The protein belongs to the AIR synthase family.

The protein resides in the cytoplasm. It catalyses the reaction 2-formamido-N(1)-(5-O-phospho-beta-D-ribosyl)acetamidine + ATP = 5-amino-1-(5-phospho-beta-D-ribosyl)imidazole + ADP + phosphate + H(+). It participates in purine metabolism; IMP biosynthesis via de novo pathway; 5-amino-1-(5-phospho-D-ribosyl)imidazole from N(2)-formyl-N(1)-(5-phospho-D-ribosyl)glycinamide: step 2/2. The polypeptide is Phosphoribosylformylglycinamidine cyclo-ligase (Alkaliphilus metalliredigens (strain QYMF)).